We begin with the raw amino-acid sequence, 331 residues long: Probable allantoicase (331 aa).

The protein belongs to the allantoicase family.

The enzyme catalyses allantoate + H2O = (S)-ureidoglycolate + urea. It functions in the pathway nitrogen metabolism; (S)-allantoin degradation; (S)-ureidoglycolate from allantoate (aminidohydrolase route): step 1/1. This chain is Probable allantoicase, found in Stutzerimonas stutzeri (strain A1501) (Pseudomonas stutzeri).